Reading from the N-terminus, the 142-residue chain is MKTFTAKPETVKRDWYVVDATGKTLGRLATELARRLRGKHKAEYTPHVDTGDYIIVLNAEKVAVTGNKRSDKMYYHHTGHIGGIKEATFEEMIARRPERVIEIAVKGMLPKGPLGRAMYRKLKVYAGNEHNHAAQQPQVLDI.

It belongs to the universal ribosomal protein uL13 family. Part of the 50S ribosomal subunit.

In terms of biological role, this protein is one of the early assembly proteins of the 50S ribosomal subunit, although it is not seen to bind rRNA by itself. It is important during the early stages of 50S assembly. The protein is Large ribosomal subunit protein uL13 of Cronobacter sakazakii (strain ATCC BAA-894) (Enterobacter sakazakii).